The chain runs to 183 residues: Capsid protein (183 aa).

Positions 136-183 (NAPILSTLPETTVVRRRGRSPRRRTPSPRRRRSQSPRRRRSQSRESQC) are disordered. Over residues 149–176 (VRRRGRSPRRRTPSPRRRRSQSPRRRRS) the composition is skewed to basic residues. A phosphoserine; by host mark is found at Ser-155, Ser-162, and Ser-170. One copy of the 1; half-length repeat lies at 155-161 (SPRRRTP). Residues 155-177 (SPRRRTPSPRRRRSQSPRRRRSQ) are 3 X 8 AA repeats of S-P-R-R-R-[PR]-S-Q. A Bipartite nuclear localization signal motif is present at residues 158 to 175 (RRTPSPRRRRSQSPRRRR). 2 tandem repeats follow at residues 162 to 169 (SPRRRRSQ) and 170 to 177 (SPRRRRSQ). An RNA binding region spans residues 177–183 (QSRESQC).

This sequence belongs to the orthohepadnavirus core antigen family. Homodimerizes, then multimerizes. Interacts with cytosol exposed regions of viral L glycoprotein present in the reticulum-to-Golgi compartment. Interacts with human FLNB. Phosphorylated form interacts with host importin alpha; this interaction depends on the exposure of the NLS, which itself depends upon genome maturation and/or phosphorylation of the capsid protein. Interacts with host NUP153. Phosphorylated by host SRPK1, SRPK2, and maybe protein kinase C or GAPDH. Phosphorylation is critical for pregenomic RNA packaging. Protein kinase C phosphorylation is stimulated by HBx protein and may play a role in transport of the viral genome to the nucleus at the late step during the viral replication cycle.

It is found in the virion. The protein resides in the host cytoplasm. Its function is as follows. Self assembles to form an icosahedral capsid. Most capsids appear to be large particles with an icosahedral symmetry of T=4 and consist of 240 copies of capsid protein, though a fraction forms smaller T=3 particles consisting of 180 capsid proteins. Entering capsids are transported along microtubules to the nucleus. Phosphorylation of the capsid is thought to induce exposure of nuclear localization signal in the C-terminal portion of the capsid protein that allows binding to the nuclear pore complex via the importin (karyopherin-) alpha and beta. Capsids are imported in intact form through the nuclear pore into the nuclear basket, where it probably binds NUP153. Only capsids that contain the mature viral genome can release the viral DNA and capsid protein into the nucleoplasm. Immature capsids get stuck in the basket. Capsids encapsulate the pre-genomic RNA and the P protein. Pre-genomic RNA is reverse-transcribed into DNA while the capsid is still in the cytoplasm. The capsid can then either be directed to the nucleus, providing more genomes for transcription, or bud through the endoplasmic reticulum to provide new virions. In Homo sapiens (Human), this protein is Capsid protein.